We begin with the raw amino-acid sequence, 301 residues long: Probable alpha-L-glutamate ligase 1 (301 aa).

In terms of domain architecture, ATP-grasp spans 104–287 (LQLLSRKGIG…VTEPIVEYIE (184 aa)). Residues Lys-141, 178–179 (EY), Asp-187, and 211–213 (RSN) contribute to the ATP site. Residues Asp-248, Glu-260, and Asn-262 each coordinate Mg(2+). Positions 248, 260, and 262 each coordinate Mn(2+).

This sequence belongs to the RimK family. It depends on Mg(2+) as a cofactor. Mn(2+) is required as a cofactor.

The sequence is that of Probable alpha-L-glutamate ligase 1 from Shewanella sp. (strain W3-18-1).